Here is a 364-residue protein sequence, read N- to C-terminus: DNA polymerase processivity factor (364 aa).

Disordered stretches follow at residues 1 to 24, 284 to 306, and 325 to 364; these read MDRS…KEPP, DDPK…KVEE, and VPTK…RCGM.

It belongs to the herpesviridae polymerase accessory protein family.

Its function is as follows. Accessory subunit of the DNA polymerase that acts to increase the processivity of polymerization. In Homo sapiens (Human), this protein is DNA polymerase processivity factor (U27).